Here is a 259-residue protein sequence, read N- to C-terminus: Ribosomal RNA small subunit methyltransferase A (259 aa).

S-adenosyl-L-methionine is bound by residues Asn13, Leu15, Gly39, Glu60, Asp84, and Asn101.

This sequence belongs to the class I-like SAM-binding methyltransferase superfamily. rRNA adenine N(6)-methyltransferase family. RsmA subfamily.

It localises to the cytoplasm. It carries out the reaction adenosine(1518)/adenosine(1519) in 16S rRNA + 4 S-adenosyl-L-methionine = N(6)-dimethyladenosine(1518)/N(6)-dimethyladenosine(1519) in 16S rRNA + 4 S-adenosyl-L-homocysteine + 4 H(+). Its function is as follows. Specifically dimethylates two adjacent adenosines (A1518 and A1519) in the loop of a conserved hairpin near the 3'-end of 16S rRNA in the 30S particle. May play a critical role in biogenesis of 30S subunits. The chain is Ribosomal RNA small subunit methyltransferase A from Mesomycoplasma hyopneumoniae (strain J / ATCC 25934 / NCTC 10110) (Mycoplasma hyopneumoniae).